The sequence spans 445 residues: UPF0210 protein SPT_0285 (445 aa).

This sequence belongs to the UPF0210 family. In terms of assembly, homodimer.

This is UPF0210 protein SPT_0285 from Streptococcus pneumoniae (strain Taiwan19F-14).